The sequence spans 1060 residues: Carbamoyl phosphate synthase large chain (1060 aa).

The interval 1–401 (MPKRQDIHKI…SLLKAVRSLE (401 aa)) is carboxyphosphate synthetic domain. ATP contacts are provided by R129, R169, G175, G176, R208, I210, E215, G241, V242, H243, Q284, and E298. An ATP-grasp 1 domain is found at 133-327 (KNLMQKLHEP…IAKMAAKIAV (195 aa)). Q284, E298, and N300 together coordinate Mg(2+). The Mn(2+) site is built by Q284, E298, and N300. The segment at 402–546 (VGLIHPERPA…YSTYESSTES (145 aa)) is oligomerization domain. The interval 547–929 (VKSDKPSVLV…ALYKAFEAAG (383 aa)) is carbamoyl phosphate synthetic domain. In terms of domain architecture, ATP-grasp 2 spans 671 to 861 (DQVIKSLKLP…LAQVATLAIL (191 aa)). ATP contacts are provided by R707, H746, L748, E752, G777, I778, H779, S780, Q820, and E832. Residues Q820, E832, and N834 each contribute to the Mg(2+) site. Mn(2+)-binding residues include Q820, E832, and N834. The MGS-like domain maps to 930 to 1060 (MHLPQFGRAL…QAFSISPIKS (131 aa)). The allosteric domain stretch occupies residues 930 to 1060 (MHLPQFGRAL…QAFSISPIKS (131 aa)).

Belongs to the CarB family. In terms of assembly, composed of two chains; the small (or glutamine) chain promotes the hydrolysis of glutamine to ammonia, which is used by the large (or ammonia) chain to synthesize carbamoyl phosphate. Tetramer of heterodimers (alpha,beta)4. The cofactor is Mg(2+). It depends on Mn(2+) as a cofactor.

It carries out the reaction hydrogencarbonate + L-glutamine + 2 ATP + H2O = carbamoyl phosphate + L-glutamate + 2 ADP + phosphate + 2 H(+). The enzyme catalyses hydrogencarbonate + NH4(+) + 2 ATP = carbamoyl phosphate + 2 ADP + phosphate + 2 H(+). The protein operates within amino-acid biosynthesis; L-arginine biosynthesis; carbamoyl phosphate from bicarbonate: step 1/1. Its pathway is pyrimidine metabolism; UMP biosynthesis via de novo pathway; (S)-dihydroorotate from bicarbonate: step 1/3. Its function is as follows. Large subunit of the glutamine-dependent carbamoyl phosphate synthetase (CPSase). CPSase catalyzes the formation of carbamoyl phosphate from the ammonia moiety of glutamine, carbonate, and phosphate donated by ATP, constituting the first step of 2 biosynthetic pathways, one leading to arginine and/or urea and the other to pyrimidine nucleotides. The large subunit (synthetase) binds the substrates ammonia (free or transferred from glutamine from the small subunit), hydrogencarbonate and ATP and carries out an ATP-coupled ligase reaction, activating hydrogencarbonate by forming carboxy phosphate which reacts with ammonia to form carbamoyl phosphate. The protein is Carbamoyl phosphate synthase large chain of Lacticaseibacillus paracasei (strain ATCC 334 / BCRC 17002 / CCUG 31169 / CIP 107868 / KCTC 3260 / NRRL B-441) (Lactobacillus paracasei).